The following is a 1497-amino-acid chain: DNA-directed RNA polymerase subunit beta' (1497 aa).

Positions 67, 69, 82, and 85 each coordinate Zn(2+). Mg(2+)-binding residues include D499, D501, and D503. Residues C867, C943, C950, and C953 each contribute to the Zn(2+) site. A disordered region spans residues 1476 to 1497 (ESNATERVVEEPATREGFANER). The span at 1482–1497 (RVVEEPATREGFANER) shows a compositional bias: basic and acidic residues.

Belongs to the RNA polymerase beta' chain family. As to quaternary structure, the RNAP catalytic core consists of 2 alpha, 1 beta, 1 beta' and 1 omega subunit. When a sigma factor is associated with the core the holoenzyme is formed, which can initiate transcription. It depends on Mg(2+) as a cofactor. Requires Zn(2+) as cofactor.

The enzyme catalyses RNA(n) + a ribonucleoside 5'-triphosphate = RNA(n+1) + diphosphate. DNA-dependent RNA polymerase catalyzes the transcription of DNA into RNA using the four ribonucleoside triphosphates as substrates. In Pelodictyon phaeoclathratiforme (strain DSM 5477 / BU-1), this protein is DNA-directed RNA polymerase subunit beta'.